Reading from the N-terminus, the 443-residue chain is Glutamate--tRNA ligase 2 (443 aa).

Positions 7–17 (PSPTGLIHVGN) match the 'HIGH' region motif. A 'KMSKS' region motif is present at residues 240-244 (KLSKR). Lys243 is an ATP binding site.

It belongs to the class-I aminoacyl-tRNA synthetase family. Glutamate--tRNA ligase type 1 subfamily. In terms of assembly, monomer.

It localises to the cytoplasm. It carries out the reaction tRNA(Glu) + L-glutamate + ATP = L-glutamyl-tRNA(Glu) + AMP + diphosphate. Its function is as follows. Catalyzes the attachment of glutamate to tRNA(Glu) in a two-step reaction: glutamate is first activated by ATP to form Glu-AMP and then transferred to the acceptor end of tRNA(Glu). The sequence is that of Glutamate--tRNA ligase 2 from Gluconacetobacter diazotrophicus (strain ATCC 49037 / DSM 5601 / CCUG 37298 / CIP 103539 / LMG 7603 / PAl5).